The sequence spans 258 residues: uncharacterized protein (258 aa).

7 consecutive transmembrane segments (helical) span residues 8–28 (VFLA…IVWF), 38–58 (VFFI…GGVH), 70–90 (EAMQ…GIFE), 121–141 (LEAI…AFAI), 176–196 (LGGI…LLVL), 204–224 (PLFL…AVLY), and 231–251 (HAAA…YWIV).

It is found in the cell membrane. This is an uncharacterized protein from Bacillus subtilis (strain 168).